Consider the following 372-residue polypeptide: Putative F-box/kelch-repeat protein At3g22730 (372 aa).

The region spanning 1–50 (MMMSDLSLDLVEEILSRVPATSLKRLRSTCKLWNALFKNPGFTKKQFLKA) is the F-box domain. 3 Kelch repeats span residues 155–204 (ILRC…SFKG), 245–293 (ALSV…PIRG), and 324–372 (KVYI…IIKE).

This Arabidopsis thaliana (Mouse-ear cress) protein is Putative F-box/kelch-repeat protein At3g22730.